The sequence spans 500 residues: L-arabinose isomerase (500 aa).

The Mn(2+) site is built by Glu-306, Glu-333, His-350, and His-450.

This sequence belongs to the arabinose isomerase family. Homohexamer. The cofactor is Mn(2+).

It carries out the reaction beta-L-arabinopyranose = L-ribulose. Its pathway is carbohydrate degradation; L-arabinose degradation via L-ribulose; D-xylulose 5-phosphate from L-arabinose (bacterial route): step 1/3. Catalyzes the conversion of L-arabinose to L-ribulose. The chain is L-arabinose isomerase from Yersinia pestis (strain Pestoides F).